Consider the following 72-residue polypeptide: N-alpha-acetyltransferase 38, NatC auxiliary subunit (72 aa).

A Sm domain is found at 3-72 (NGEILLTSWL…KHIKSFSVRA (70 aa)).

As to quaternary structure, component of the N-terminal acetyltransferase C (NatC) complex, composed of the catalytic subunit Naa30, a large auxiliary subunit Naa35 and a small auxiliary subunit Naa38.

It is found in the endoplasmic reticulum. Its function is as follows. Component of the NatC N-terminal acetyltransferase, which associates with the ribosome to acetylate nascent protein chains in a cotranslational manner. NatC acetylates protein N-termini starting with methionine, followed by a hydrophobic or amphipathic amino acid, with amino acids at positions 3 and 4 also contributing to NatC recognition. The first 4 amino acids of cognate substrates are recognized at the Naa30-Naa35 interface. NatC-dependent acetylation targets various substrate proteins to specific subcellular sites. The sequence is that of N-alpha-acetyltransferase 38, NatC auxiliary subunit (naa38) from Schizosaccharomyces pombe (strain 972 / ATCC 24843) (Fission yeast).